The chain runs to 386 residues: Tryptophan--tRNA ligase (386 aa).

The 'HIGH' region signature appears at 82–90 (PSGPMHIGH). Residues 253 to 257 (KMSAS) carry the 'KMSKS' region motif.

The protein belongs to the class-I aminoacyl-tRNA synthetase family.

The protein resides in the cytoplasm. It carries out the reaction tRNA(Trp) + L-tryptophan + ATP = L-tryptophyl-tRNA(Trp) + AMP + diphosphate + H(+). The polypeptide is Tryptophan--tRNA ligase (Pyrococcus horikoshii (strain ATCC 700860 / DSM 12428 / JCM 9974 / NBRC 100139 / OT-3)).